A 761-amino-acid polypeptide reads, in one-letter code: Proline-rich extensin-like protein EPR1 (761 aa).

A signal peptide spans 1–24 (MRVPLIDFLRFLVLILSLSGASVA). A 1; degenerate repeat occupies 63–77 (YSPPIYPPPIQKPPT). Residues 63-735 (YSPPIYPPPI…PPVQVPPTPT (673 aa)) are 40 X 17 AA approximate tandem repeats of Y-S-P-P-[IV]-[KY]-P-P-P-x(1,2)-K-P-P-T-P-T. 39 tandem repeats follow at residues 78 to 94 (YSPPIYPPPIQKPPTPT), 95 to 111 (YSPPIYPPPIQKPPTPT), 112 to 128 (YSPPIYPPPIQKPPTPT), 129 to 145 (YSPPIYPPPIQKPPTPS), 146 to 162 (YSPPVKPPPVQMPPTPT), 163 to 179 (YSPPIKPPPVHKPPTPT), 180 to 195 (YSPPIKPPVHKPPTPI), 196 to 212 (YSPPIKPPPVHKPPTPI), 213 to 229 (YSPPIKPPPVHKPPTPT), 230 to 246 (YSPPVKPPPVHKPPTPI), 247 to 263 (YSPPIKPPPVHKPPTPI), 264 to 280 (YSPPVKPPPVQTPPTPI), 281 to 297 (YSPPVKPPPVHKPPTPT), 298 to 314 (YSPPVKSPPVQKPPTPT), 315 to 331 (YSPPIKPPPVQKPPTPT), 332 to 347 (YSPPIKPPPVKPPTPI), 348 to 364 (YSPPVKPPPVHKPPTPI), 365 to 381 (YSPPVKPPPVHKPPTPI), 382 to 398 (YSPPVKPPPIQKPPTPT), 399 to 415 (YSPPIKPPPLQKPPTPT), 416 to 431 (YSPPIKLPPVKPPTPI), 432 to 448 (YSPPVKPPPVHKPPTPI), 449 to 465 (YSPPVKPPPVHKPPTPT), 466 to 481 (YSPPIKPPPVKPPTPT), 482 to 498 (YSPPVQPPPVQKPPTPT), 499 to 515 (YSPPVKPPPIQKPPTPT), 516 to 531 (YSPPIKPPPVKPPTPT), 532 to 548 (YSPPIKPPPVHKPPTPT), 549 to 565 (YSPPIKPPPIHKPPTPT), 566 to 582 (YSPPIKPPPVHKPPTPT), 583 to 599 (YSPPIKPPPVHKPPTPT), 600 to 616 (YSPPIKPPPVHKPPTPT), 617 to 633 (YSPPIKPPPVHKPPTPT), 634 to 650 (YSPPIKPPPVHKPPTPT), 651 to 667 (YSPPIKPPPVQKPPTPT), 668 to 684 (YSPPVKPPPVQLPPTPT), 685 to 701 (YSPPVKPPPVQVPPTPT), 702 to 718 (YSPPVKPPPVQVPPTPT), and 719 to 735 (YSPPIKPPPVQVPPTPT). Positions 111-750 (TYSPPIYPPP…QGGYGTPPPY (640 aa)) are enriched in pro residues. Residues 111–761 (TYSPPIYPPP…YLSHPIDIRN (651 aa)) are disordered.

Belongs to the extensin family. Specifically expressed in endosperm during seed germination, at the site of radicle protrusion.

Its subcellular location is the secreted. The protein resides in the primary cell wall. Its function is as follows. May have a specific role in modifying the cell-wall structure, specifically during seed germination, thus facilitating radicle protrusion. In Arabidopsis thaliana (Mouse-ear cress), this protein is Proline-rich extensin-like protein EPR1 (EPR1).